The primary structure comprises 390 residues: Transforming growth factor beta-1 proprotein (390 aa).

Residues 1-29 (MPPSGLRLLPLLLPLLRLLVLTPGRPAAG) form the signal peptide. The tract at residues 30-74 (LSTCKTIDMELVKRKRIEAIRGQILSKLRLSSPPSQGEVPPVPLP) is straightjacket domain. The tract at residues 75 to 271 (EAVLALYNST…ATPLERAQHL (197 aa)) is arm domain. Residues Asn82, Asn136, and Asn176 are each glycosylated (N-linked (GlcNAc...) asparagine). Positions 226–252 (DSKDNTLQVDINGFSSSRRGDLATIHG) are bowtie tail. The Cell attachment site signature appears at 244–246 (RGD). Intrachain disulfides connect Cys285–Cys294, Cys293–Cys356, Cys322–Cys387, and Cys326–Cys389.

This sequence belongs to the TGF-beta family. Homodimer; disulfide-linked. Interacts with the serine proteases, HTRA1 and HTRA3: the interaction with either inhibits TGFB1-mediated signaling and the HTRA protease activity is required for this inhibition. May interact with THSD4; this interaction may lead to sequestration by FBN1 microfibril assembly and attenuation of TGFB signaling. Interacts with CD109, DPT and ASPN. Interacts with EFEMP2. Interacts with TSKU; the interaction contributes to regulation of the hair cycle. Interacts with TGFBR3. In terms of assembly, homodimer; disulfide-linked. Interacts with transforming growth factor beta-1 (TGF-beta-1) chain; interaction is non-covalent and maintains TGF-beta-1 in a latent state; each latency-associated peptide (LAP) monomer interacts with TGF-beta-1 in the other monomer. Interacts with LTBP1; leading to regulation of TGF-beta-1 activation. Interacts with LRRC32/GARP; leading to regulation of TGF-beta-1 activation on the surface of activated regulatory T-cells (Tregs). Interacts with LRRC33/NRROS; leading to regulation of TGF-beta-1 activation in macrophages and microglia. Interacts (via cell attachment site) with integrins ITGAV and ITGB6 (ITGAV:ITGB6), leading to release of the active TGF-beta-1. Interacts with NREP; the interaction results in a decrease in TGFB1 autoinduction. Interacts with HSP90AB1; inhibits latent TGFB1 activation. As to quaternary structure, homodimer; disulfide-linked. Interacts with TGF-beta receptors (TGFBR1 and TGFBR2), leading to signal transduction. Post-translationally, transforming growth factor beta-1 proprotein: The precursor proprotein is cleaved in the Golgi apparatus by FURIN to form Transforming growth factor beta-1 (TGF-beta-1) and Latency-associated peptide (LAP) chains, which remain non-covalently linked, rendering TGF-beta-1 inactive. In terms of processing, N-glycosylated. Deglycosylation leads to activation of Transforming growth factor beta-1 (TGF-beta-1); mechanisms triggering deglycosylation-driven activation of TGF-beta-1 are however unclear.

It localises to the secreted. It is found in the extracellular space. The protein localises to the extracellular matrix. Functionally, transforming growth factor beta-1 proprotein: Precursor of the Latency-associated peptide (LAP) and Transforming growth factor beta-1 (TGF-beta-1) chains, which constitute the regulatory and active subunit of TGF-beta-1, respectively. In terms of biological role, required to maintain the Transforming growth factor beta-1 (TGF-beta-1) chain in a latent state during storage in extracellular matrix. Associates non-covalently with TGF-beta-1 and regulates its activation via interaction with 'milieu molecules', such as LTBP1, LRRC32/GARP and LRRC33/NRROS, that control activation of TGF-beta-1. Interaction with LRRC33/NRROS regulates activation of TGF-beta-1 in macrophages and microglia. Interaction with LRRC32/GARP controls activation of TGF-beta-1 on the surface of activated regulatory T-cells (Tregs). Interaction with integrins (ITGAV:ITGB6 or ITGAV:ITGB8) results in distortion of the Latency-associated peptide chain and subsequent release of the active TGF-beta-1. Multifunctional protein that regulates the growth and differentiation of various cell types and is involved in various processes, such as normal development, immune function, microglia function and responses to neurodegeneration. Activation into mature form follows different steps: following cleavage of the proprotein in the Golgi apparatus, Latency-associated peptide (LAP) and Transforming growth factor beta-1 (TGF-beta-1) chains remain non-covalently linked rendering TGF-beta-1 inactive during storage in extracellular matrix. At the same time, LAP chain interacts with 'milieu molecules', such as LTBP1, LRRC32/GARP and LRRC33/NRROS that control activation of TGF-beta-1 and maintain it in a latent state during storage in extracellular milieus. TGF-beta-1 is released from LAP by integrins (ITGAV:ITGB6 or ITGAV:ITGB8): integrin-binding to LAP stabilizes an alternative conformation of the LAP bowtie tail and results in distortion of the LAP chain and subsequent release of the active TGF-beta-1. Once activated following release of LAP, TGF-beta-1 acts by binding to TGF-beta receptors (TGFBR1 and TGFBR2), which transduce signal. While expressed by many cells types, TGF-beta-1 only has a very localized range of action within cell environment thanks to fine regulation of its activation by Latency-associated peptide chain (LAP) and 'milieu molecules'. Plays an important role in bone remodeling: acts as a potent stimulator of osteoblastic bone formation, causing chemotaxis, proliferation and differentiation in committed osteoblasts. Can promote either T-helper 17 cells (Th17) or regulatory T-cells (Treg) lineage differentiation in a concentration-dependent manner. At high concentrations, leads to FOXP3-mediated suppression of RORC and down-regulation of IL-17 expression, favoring Treg cell development. At low concentrations in concert with IL-6 and IL-21, leads to expression of the IL-17 and IL-23 receptors, favoring differentiation to Th17 cells. Stimulates sustained production of collagen through the activation of CREB3L1 by regulated intramembrane proteolysis (RIP). Mediates SMAD2/3 activation by inducing its phosphorylation and subsequent translocation to the nucleus. Positively regulates odontoblastic differentiation in dental papilla cells, via promotion of IPO7-mediated translocation of phosphorylated SMAD2 to the nucleus and subsequent transcription of target genes. Can induce epithelial-to-mesenchymal transition (EMT) and cell migration in various cell types. This Canis lupus familiaris (Dog) protein is Transforming growth factor beta-1 proprotein (TGFB1).